The chain runs to 226 residues: Phosphoheptose isomerase (226 aa).

In terms of domain architecture, SIS spans 50–212 (IAGVFETGGK…ERMMGYGTEC (163 aa)). Residue 65 to 67 (NGG) coordinates substrate. Histidine 74 and glutamate 78 together coordinate Zn(2+). Residues glutamate 78, 109–110 (ND), 135–137 (STS), serine 140, and glutamine 188 each bind substrate. Residues glutamine 188 and histidine 196 each coordinate Zn(2+).

Belongs to the SIS family. GmhA subfamily. Requires Zn(2+) as cofactor.

The protein localises to the cytoplasm. It carries out the reaction 2 D-sedoheptulose 7-phosphate = D-glycero-alpha-D-manno-heptose 7-phosphate + D-glycero-beta-D-manno-heptose 7-phosphate. The protein operates within carbohydrate biosynthesis; D-glycero-D-manno-heptose 7-phosphate biosynthesis; D-glycero-alpha-D-manno-heptose 7-phosphate and D-glycero-beta-D-manno-heptose 7-phosphate from sedoheptulose 7-phosphate: step 1/1. In terms of biological role, catalyzes the isomerization of sedoheptulose 7-phosphate in D-glycero-D-manno-heptose 7-phosphate. The sequence is that of Phosphoheptose isomerase from Chlorobium phaeobacteroides (strain DSM 266 / SMG 266 / 2430).